We begin with the raw amino-acid sequence, 153 residues long: D-aminoacyl-tRNA deacylase (153 aa).

Positions 137-138 (GP) match the Gly-cisPro motif, important for rejection of L-amino acids motif.

The protein belongs to the DTD family. As to quaternary structure, homodimer.

The protein localises to the cytoplasm. It carries out the reaction glycyl-tRNA(Ala) + H2O = tRNA(Ala) + glycine + H(+). The enzyme catalyses a D-aminoacyl-tRNA + H2O = a tRNA + a D-alpha-amino acid + H(+). An aminoacyl-tRNA editing enzyme that deacylates mischarged D-aminoacyl-tRNAs. Also deacylates mischarged glycyl-tRNA(Ala), protecting cells against glycine mischarging by AlaRS. Acts via tRNA-based rather than protein-based catalysis; rejects L-amino acids rather than detecting D-amino acids in the active site. By recycling D-aminoacyl-tRNA to D-amino acids and free tRNA molecules, this enzyme counteracts the toxicity associated with the formation of D-aminoacyl-tRNA entities in vivo and helps enforce protein L-homochirality. This Myxococcus xanthus (strain DK1622) protein is D-aminoacyl-tRNA deacylase.